We begin with the raw amino-acid sequence, 537 residues long: T-complex protein 1 subunit theta (537 aa).

It belongs to the TCP-1 chaperonin family. Heterooligomeric complex.

It is found in the cytoplasm. Functionally, molecular chaperone; assists the folding of proteins upon ATP hydrolysis. Known to play a role, in vitro, in the folding of actin and tubulin. In Dictyostelium discoideum (Social amoeba), this protein is T-complex protein 1 subunit theta (cct8).